Here is a 537-residue protein sequence, read N- to C-terminus: Mitochondrial inner membrane magnesium transporter MRS2 (537 aa).

The N-terminal 26 residues, 1 to 26, are a transit peptide targeting the mitochondrion; sequence MQSTLCLPVPSRSLLRFLRCQSKRAF. The disordered stretch occupies residues 79–112; the sequence is DPVTRKLPDRNQPLTSQNHFSTSRNAQGFWSGRK. Residues 90–112 are compositionally biased toward polar residues; that stretch reads QPLTSQNHFSTSRNAQGFWSGRK. The next 2 helical transmembrane spans lie at 425–445 and 456–476; these read FSVG…YGMN and GFAG…WYGL. The YGMN motif lies at 442–445; sequence YGMN.

It belongs to the CorA metal ion transporter (MIT) (TC 1.A.35) family. Homopentamer. Forms homooligomers. Interacts with MFM1.

The protein localises to the mitochondrion inner membrane. In terms of biological role, high-conductance magnesium-selective channel that mediates the influx of magnesium into the mitochondrial matrix. Essential for the splicing of mRNA group II introns in mitochondria by affecting mitochondrial magnesium concentrations, which are critical for group II intron splicing. It also suppresses a variety of mitochondrial intron mutations and its absence may disturb the assembly of mitochondrial membrane complexes. The protein is Mitochondrial inner membrane magnesium transporter MRS2 (MRS2) of Gibberella zeae (strain ATCC MYA-4620 / CBS 123657 / FGSC 9075 / NRRL 31084 / PH-1) (Wheat head blight fungus).